The primary structure comprises 497 residues: Serine/threonine-protein phosphatase 2A 56 kDa regulatory subunit beta isoform (497 aa).

Over residues 1–19 (METKLPPASTPTSPSSPGL) the composition is skewed to low complexity. 2 disordered regions span residues 1 to 55 (METK…YQSN) and 473 to 497 (QGTQ…GGQS). A phosphoserine mark is found at Ser-32, Ser-35, Ser-44, Ser-46, Ser-47, and Ser-48. A compositionally biased stretch (basic residues) spans 34–45 (RSLRRARPRRSH).

It belongs to the phosphatase 2A regulatory subunit B56 family. As to quaternary structure, component of the serine/threonine-protein phosphatase 2A complex (PP2A). This complex consists of a common heterodimeric core enzyme, composed of a 36 kDa catalytic subunit (subunit C) and a 65 kDa constant scaffold subunit (PR65 or subunit A), that associates with a variety of regulatory subunits. Proteins that associate with the core dimer include three families of regulatory subunits B (the R2/B/PR55/B55, R3/B''/PR72/PR130/PR59 and R5/B'/B56 families), the 48 kDa variable regulatory subunit, viral proteins, and cell signaling molecules. Interacts with SGO1. Interacts with AKT1. Ubiquitinated by CUL3-KLHL15 complex; this modification leads to proteasomal degradation. As to expression, widely expressed at the mRNA level, with highest levels in cerebellum and lung.

Its subcellular location is the cytoplasm. Functionally, as the regulatory component of the serine/threonine-protein phosphatase 2A (PP2A) holoenzyme, modulates substrate specificity, subcellular localization, and responsiveness to phosphorylation. The phosphorylated form mediates the interaction between PP2A and AKT1, leading to AKT1 dephosphorylation. This Rattus norvegicus (Rat) protein is Serine/threonine-protein phosphatase 2A 56 kDa regulatory subunit beta isoform (Ppp2r5b).